Reading from the N-terminus, the 158-residue chain is Cyclic pyranopterin monophosphate synthase (158 aa).

Substrate contacts are provided by residues 76 to 78 (LCH) and 114 to 115 (ME). Asp129 is an active-site residue.

Belongs to the MoaC family. As to quaternary structure, homohexamer; trimer of dimers.

The enzyme catalyses (8S)-3',8-cyclo-7,8-dihydroguanosine 5'-triphosphate = cyclic pyranopterin phosphate + diphosphate. It functions in the pathway cofactor biosynthesis; molybdopterin biosynthesis. In terms of biological role, catalyzes the conversion of (8S)-3',8-cyclo-7,8-dihydroguanosine 5'-triphosphate to cyclic pyranopterin monophosphate (cPMP). The polypeptide is Cyclic pyranopterin monophosphate synthase (Shewanella piezotolerans (strain WP3 / JCM 13877)).